The chain runs to 110 residues: Plasma membrane ATPase (110 aa).

Positions 72 and 76 each coordinate Mg(2+). A disordered region spans residues 88–110 (APESTSLNLPNDKELSEIAEQAK). Basic and acidic residues predominate over residues 98 to 110 (NDKELSEIAEQAK).

This sequence belongs to the cation transport ATPase (P-type) (TC 3.A.3) family. Type IIIA subfamily. The N-terminus is blocked.

It localises to the cell membrane. The enzyme catalyses ATP + H2O + H(+)(in) = ADP + phosphate + 2 H(+)(out). Functionally, the plasma membrane ATPase of plants and fungi is a hydrogen ion pump. The proton gradient it generates drives the active transport of nutrients by H(+)-symport. The resulting external acidification and/or internal alkinization may mediate growth responses. The sequence is that of Plasma membrane ATPase from Avena sativa (Oat).